Consider the following 99-residue polypeptide: Large ribosomal subunit protein bL21 (99 aa).

This sequence belongs to the bacterial ribosomal protein bL21 family. As to quaternary structure, part of the 50S ribosomal subunit. Contacts protein L20.

In terms of biological role, this protein binds to 23S rRNA in the presence of protein L20. The chain is Large ribosomal subunit protein bL21 from Mycoplasmopsis pulmonis (strain UAB CTIP) (Mycoplasma pulmonis).